The chain runs to 165 residues: Methylated-DNA--protein-cysteine methyltransferase, constitutive (165 aa).

C130 (nucleophile; methyl group acceptor) is an active-site residue.

It belongs to the MGMT family.

It localises to the cytoplasm. It catalyses the reaction a 6-O-methyl-2'-deoxyguanosine in DNA + L-cysteinyl-[protein] = S-methyl-L-cysteinyl-[protein] + a 2'-deoxyguanosine in DNA. It carries out the reaction a 4-O-methyl-thymidine in DNA + L-cysteinyl-[protein] = a thymidine in DNA + S-methyl-L-cysteinyl-[protein]. Involved in the cellular defense against the biological effects of O6-methylguanine (O6-MeG) and O4-methylthymine (O4-MeT) in DNA. Repairs the methylated nucleobase in DNA by stoichiometrically transferring the methyl group to a cysteine residue in the enzyme. This is a suicide reaction: the enzyme is irreversibly inactivated. The chain is Methylated-DNA--protein-cysteine methyltransferase, constitutive from Bacillus subtilis (strain 168).